Here is a 633-residue protein sequence, read N- to C-terminus: Probable potassium transport system protein Kup 2 (633 aa).

12 helical membrane passes run 18–38 (FLAM…TSPL), 61–81 (LISL…VLFL), 109–129 (LMFM…MITP), 145–165 (PAFH…LFAV), 173–193 (VSIF…AAGV), 211–231 (AVTF…AVFL), 255–275 (WFAV…ALVL), 287–307 (LMFP…ATII), 345–365 (IYLP…MFMF), 371–391 (LATA…VLAF), 405–425 (ATAV…ANLF), and 427–447 (IHDG…TMWT).

It belongs to the HAK/KUP transporter (TC 2.A.72) family.

It localises to the cell inner membrane. It carries out the reaction K(+)(in) + H(+)(in) = K(+)(out) + H(+)(out). Its function is as follows. Transport of potassium into the cell. Likely operates as a K(+):H(+) symporter. This chain is Probable potassium transport system protein Kup 2, found in Sinorhizobium medicae (strain WSM419) (Ensifer medicae).